Reading from the N-terminus, the 336-residue chain is Nuclear envelope-associated protein 1 (336 aa).

Residues 125-261 (CSMLKQQLDD…RRTDQDLKKK (137 aa)) are a coiled coil. The Bipartite nuclear localization signal motif lies at 240 to 261 (KTKELESQLEKQRRTDQDLKKK). A helical transmembrane segment spans residues 313 to 330 (FWDNSGFKIVVSMSMLML).

Forms heteromers with NEAP2 and NEAP3. Interacts with SUN1; SUN2 and bZIP18.

It localises to the nucleus inner membrane. Its subcellular location is the nucleus. The protein resides in the nucleoplasm. The chain is Nuclear envelope-associated protein 1 from Arabidopsis thaliana (Mouse-ear cress).